The primary structure comprises 269 residues: S-adenosylmethionine decarboxylase proenzyme (269 aa).

The Schiff-base intermediate with substrate; via pyruvic acid role is filled by Ser118. Ser118 bears the Pyruvic acid (Ser); by autocatalysis mark. The Proton acceptor; for processing activity role is filled by His123. The Proton donor; for catalytic activity role is filled by Cys146.

It belongs to the prokaryotic AdoMetDC family. Type 2 subfamily. As to quaternary structure, heterooctamer of four alpha and four beta chains arranged as a tetramer of alpha/beta heterodimers. Requires pyruvate as cofactor. Post-translationally, is synthesized initially as an inactive proenzyme. Formation of the active enzyme involves a self-maturation process in which the active site pyruvoyl group is generated from an internal serine residue via an autocatalytic post-translational modification. Two non-identical subunits are generated from the proenzyme in this reaction, and the pyruvate is formed at the N-terminus of the alpha chain, which is derived from the carboxyl end of the proenzyme. The post-translation cleavage follows an unusual pathway, termed non-hydrolytic serinolysis, in which the side chain hydroxyl group of the serine supplies its oxygen atom to form the C-terminus of the beta chain, while the remainder of the serine residue undergoes an oxidative deamination to produce ammonia and the pyruvoyl group blocking the N-terminus of the alpha chain.

It catalyses the reaction S-adenosyl-L-methionine + H(+) = S-adenosyl 3-(methylsulfanyl)propylamine + CO2. The protein operates within amine and polyamine biosynthesis; S-adenosylmethioninamine biosynthesis; S-adenosylmethioninamine from S-adenosyl-L-methionine: step 1/1. Functionally, catalyzes the decarboxylation of S-adenosylmethionine to S-adenosylmethioninamine (dcAdoMet), the propylamine donor required for the synthesis of the polyamines spermine and spermidine from the diamine putrescine. This Brevibacillus brevis (strain 47 / JCM 6285 / NBRC 100599) protein is S-adenosylmethionine decarboxylase proenzyme.